The sequence spans 957 residues: MTKPVLVLVGHGMVGHHFLEQCVSRDLHQQYRIVVFCEERYAAYDRVHLTEYFAGRSAESLSLVEGDFFTQHGIELRLSESVASIDREARVVRDAFGHETHWDKLVLATGSYPFVPPVPGHNLEGCFVYRTLDDLDQIAARAATARRGVVIGGGLLGLEAANALKQLGLETHVVEFAPNLMAVQLDNGGAAMLREKISELGVGVHTSKATTEIVRNEQGLQLNFRDGSSLATDMLVFSAGIRPQDALARSGGLSVGERGGICIDNQCRTSDPDVLAIGECALWENKIYGLVAPGYQMAARRAATLAGEAGSFSGADMSTKLKLLGVDVASFGDAQGRTPGCQSYQWTHGPQQVYKKIVVSADGKNLLGGVLVGDAGDYATLLQMMLNGMALPKHPESLILPALEGSRPKALGVAALPDGAQICSCHNVSKGDICQAVSGGAGDMAAIKSRTKAATGCGGCSALVKQVMEYQLAEQGVEVKKDICEHFPWSRQEIYHLVRVNHIRTFEQLIARYGQGHGCEVCKPLVASVLASCWNEYLLKPAHLPLQDTNDRYFANIQKDGTYSVVPRMAAGEVTPDGLIAIGQIAKRYQLYSKVTGGQRIDLFGARLEQLPAIWRELAEAGFETGHAYGKSLRTVKSCVGSTWCRYGVQDSTGLAVTLEHRYKGLRAPHKIKMAVSGCTRECAEAQGKDIGVIATEKGWNLYVCGNGGMKPRHADLFASDLDEATLIRSIDRLLMFYIRTADRLQRTSTWMDNLEGGVDYLREMILEDSLGIGEELEQEMARVVESYQCEWQTTLNDPQRLALFRSYVNSDEPDETVQRQTLRGQPQLAPFAAQGEPALPSRPWQAICDLDAIPQQAGIGARLGERQIALFRFGDQVYALDNLEPGSEANVLSRGLLGDAGGEPIVISPLYKQRIRLRDGRQCDGGEQAVRAWPVKVENGKVWVGNQQLLARAEAS.

44 to 79 (YDRVHLTEYFAGRSAESLSLVEGDFFTQHGIELRLS) contacts FAD. Residue 193–225 (LREKISELGVGVHTSKATTEIVRNEQGLQLNFR) participates in NAD(+) binding. C423, C425, C457, and C460 together coordinate [2Fe-2S] cluster. C639, C645, C679, and C683 together coordinate [4Fe-4S] cluster. C683 provides a ligand contact to siroheme.

It belongs to the nitrite and sulfite reductase 4Fe-4S domain family. As to quaternary structure, homodimer which associates with NirD. Requires siroheme as cofactor. [2Fe-2S] cluster serves as cofactor. The cofactor is [4Fe-4S] cluster. It depends on FAD as a cofactor.

It catalyses the reaction NH4(+) + 3 NADP(+) + 2 H2O = nitrite + 3 NADPH + 5 H(+). The catalysed reaction is NH4(+) + 3 NAD(+) + 2 H2O = nitrite + 3 NADH + 5 H(+). Its pathway is nitrogen metabolism; nitrate reduction (assimilation). In Klebsiella oxytoca, this protein is Nitrite reductase [NAD(P)H] large subunit (nasB).